Consider the following 499-residue polypeptide: Spore germination protein GerQA (499 aa).

3 consecutive transmembrane segments (helical) span residues Leu-285–His-305, Ser-376–Tyr-396, and Phe-409–Leu-429.

The protein belongs to the GerABKA family.

It localises to the membrane. Its function is as follows. Required for the germination response to inosine. Has no role in L-alanine germination. This Bacillus cereus protein is Spore germination protein GerQA (gerQA).